Here is a 237-residue protein sequence, read N- to C-terminus: MRLKIKAIWVPTVPDIEYLKKLALRGAVNKTVKVSSSEFHKHTGDSSKTAARKLKQMEEERLIERKIVPGGQLIKMTEKGIEILKNEYIEYSRIFSSEPDVLELEGNVLKGLGEGQYYINIPGYRNQFEEKLNFVPFPGTLNVQLSESSSALRNRLKEMPAVRIDGFNDGERTFGGGNCYPIKVEGIEAAVVVPDRTHYPADLIEIIAPVKLRDALKLKDGDRIVTRVKKQGMEGQK.

The unknown stretch occupies residues 1 to 101 (MRLKIKAIWV…SRIFSSEPDV (101 aa)). The interval 102–237 (LELEGNVLKG…VKKQGMEGQK (136 aa)) is riboflavin kinase. 111-116 (GLGEGQ) is a binding site for CDP. Thr140 and Asn142 together coordinate Mg(2+). 2 residues coordinate FMN: Thr197 and Glu205. A CDP-binding site is contributed by 210-213 (VKLR).

It belongs to the archaeal riboflavin kinase family. Mg(2+) serves as cofactor.

The enzyme catalyses riboflavin + CTP = CDP + FMN + H(+). The protein operates within cofactor biosynthesis; FMN biosynthesis; FMN from riboflavin (CTP route): step 1/1. Its function is as follows. Catalyzes the CTP-dependent phosphorylation of riboflavin (vitamin B2) to form flavin mononucleotide (FMN). This Methanosarcina acetivorans (strain ATCC 35395 / DSM 2834 / JCM 12185 / C2A) protein is Riboflavin kinase (ribK).